A 196-amino-acid chain; its full sequence is Urease accessory protein UreE (196 aa).

The disordered stretch occupies residues 150 to 196 (RGAYSGGHDHGHAHAHSHAEAHSHAHGESHSHSHSHSHDDHHHHDHD). A compositionally biased stretch (basic and acidic residues) spans 156-196 (GHDHGHAHAHSHAEAHSHAHGESHSHSHSHSHDDHHHHDHD).

The protein belongs to the UreE family.

Its subcellular location is the cytoplasm. Functionally, involved in urease metallocenter assembly. Binds nickel. Probably functions as a nickel donor during metallocenter assembly. The protein is Urease accessory protein UreE of Mesorhizobium japonicum (strain LMG 29417 / CECT 9101 / MAFF 303099) (Mesorhizobium loti (strain MAFF 303099)).